Here is a 301-residue protein sequence, read N- to C-terminus: Olfactory receptor 10AG1 (301 aa).

At 1–16 (MEFVLLGFSDIPNLHW) the chain is on the extracellular side. A helical membrane pass occupies residues 17 to 37 (MLFSIFLLMYLMILMCNGIII). The Cytoplasmic portion of the chain corresponds to 38-45 (LLIKIHPA). A helical membrane pass occupies residues 46-66 (LQTPMYFFLSNFSLLEICYVT). Over 67 to 90 (IIIPRMLMDIWTQKGNISLFACAT) the chain is Extracellular. N82 carries an N-linked (GlcNAc...) asparagine glycan. A disulfide bridge connects residues C88 and C180. Residues 91 to 111 (QMCFFLMLGGTECLLLTVMAY) form a helical membrane-spanning segment. Over 112–130 (DRYVAICKPLQYPLVMNHK) the chain is Cytoplasmic. Residues 131–151 (VCIQLIIASWTITIPVVIGET) form a helical membrane-spanning segment. The Extracellular segment spans residues 152 to 188 (CQIFLLPFCGTNTINHFFCDIPPILKLACGNIFVNEI). A helical membrane pass occupies residues 189 to 208 (TVHVVAVVFITVPFLLIVVS). The Cytoplasmic portion of the chain corresponds to 209–228 (YGKIISNILKLSSARGKAKA). Residues 229-249 (FSTCSSHLIVVILFFGAGTIT) form a helical membrane-spanning segment. Topologically, residues 250-262 (YLQPKPHQFQRMG) are extracellular. A helical transmembrane segment spans residues 263 to 283 (KLISLFYTILIPTLNPIIYTL). Residues 284–301 (RNKDIMVALRKLLAKLLT) lie on the Cytoplasmic side of the membrane.

The protein belongs to the G-protein coupled receptor 1 family.

The protein resides in the cell membrane. Odorant receptor. In Homo sapiens (Human), this protein is Olfactory receptor 10AG1 (OR10AG1).